The following is a 476-amino-acid chain: MRVLFTGAECAPFFKTGGLGDVLGSLPNQLAKEGVDVGVVLPLYQDLPEKYRKNLKYQGNFIVPVGWRNQYCGIFTLKLNGVNYFFIDNEYYFKRPGIYGYYDDGERYAYFQQAVIMMMERFDFIPDVLHCNDYHTAFIPFLLHEKWGFVDAYKGIKTILTIHNLEFQGKYNAKTLPDFFGMNYDWFDSGIVRMDNDVNWMKTGILYADRVTTVSPSYAREIQTVEFGQGLDAILRMCSHKLTGILNGIDFEKYNPKTDPVIKKNYDVYHLHHKSKDKIALQKELDLPIKPNIPLIGMVSRLTAQKGCQLLLDELDNILQFNVQIVILGNGDPYYEHRLMEIAERYPDKLKVILAFDVKLAQRIYAGADSFLMPSAFEPCGLSQLIALRYGTLPIVHEIGGLADTVWVYDETTNEGTGFGFKEFSGYQMVQAIKKMLALYQQKNNWLKIQKIAMKSDFSWKNSADKYKWMYGELIG.

Residue K15 coordinates ADP-alpha-D-glucose.

Belongs to the glycosyltransferase 1 family. Bacterial/plant glycogen synthase subfamily.

It carries out the reaction [(1-&gt;4)-alpha-D-glucosyl](n) + ADP-alpha-D-glucose = [(1-&gt;4)-alpha-D-glucosyl](n+1) + ADP + H(+). The protein operates within glycan biosynthesis; glycogen biosynthesis. Synthesizes alpha-1,4-glucan chains using ADP-glucose. In Lactobacillus acidophilus (strain ATCC 700396 / NCK56 / N2 / NCFM), this protein is Glycogen synthase.